The chain runs to 386 residues: Zinc transporter 7-A (386 aa).

The Cytoplasmic segment spans residues 1-37 (MLPLSIKDDEYKPPKFNLARKVSGWIRSIFSDSTSRN). The chain crosses the membrane as a helical span at residues 38 to 58 (LFCFLCLNLSFAFVELFYGIW). The Lumenal segment spans residues 59–67 (SNSLGLISD). A helical membrane pass occupies residues 68–88 (SFHMFFDCTALLAGLAASVIS). At 89 to 102 (RWKTNEAFSYGYVR) the chain is on the cytoplasmic side. The helical transmembrane segment at 103-123 (AEVLAGFVNGLFLIFTAFFIF) threads the bilayer. Topologically, residues 124-140 (SEGVERALDTPEVHHER) are lumenal. The chain crosses the membrane as a helical span at residues 141–161 (LLPVSIMGLLVNIIGIFVFQH). The his-rich loop stretch occupies residues 161 to 222 (HGGGHGHSHE…GHSHDHSPKH (62 aa)). Residues 162–246 (GGGHGHSHES…KGSSKQILEG (85 aa)) lie on the Cytoplasmic side of the membrane. A disordered region spans residues 167 to 239 (HSHESGHGHS…DEPPEEHKGS (73 aa)). A compositionally biased stretch (basic and acidic residues) spans 228 to 238 (CHDEPPEEHKG). Residues 247-267 (VFLHIVADTLGSVGVIFSTIL) traverse the membrane as a helical segment. The Lumenal portion of the chain corresponds to 268–272 (MQRYG). Residues 273 to 293 (LMIADPICSMLIALLIFVSVI) form a helical membrane-spanning segment. Residues 294–386 (PLLKQSIGIL…LYVQIDFAAI (93 aa)) are Cytoplasmic-facing.

Belongs to the cation diffusion facilitator (CDF) transporter (TC 2.A.4) family. SLC30A subfamily. In terms of assembly, homooligomer.

The protein resides in the golgi apparatus membrane. Its subcellular location is the cytoplasmic vesicle. It localises to the golgi apparatus. The protein localises to the trans-Golgi network. It is found in the sarcoplasmic reticulum. The protein resides in the mitochondrion. The enzyme catalyses Zn(2+)(in) = Zn(2+)(out). Zinc ion transporter mediating zinc entry from the cytosol into the lumen of organelles along the secretory pathway. By contributing to zinc ion homeostasis within the early secretory pathway, regulates the activation and folding of enzymes like alkaline phosphatases. The polypeptide is Zinc transporter 7-A (slc30a7-a) (Xenopus laevis (African clawed frog)).